We begin with the raw amino-acid sequence, 71 residues long: Large ribosomal subunit protein eL38 (71 aa).

It belongs to the eukaryotic ribosomal protein eL38 family.

This chain is Large ribosomal subunit protein eL38 (RpL38), found in Argas monolakensis (Mono lake bird tick).